The following is a 623-amino-acid chain: tRNA uridine 5-carboxymethylaminomethyl modification enzyme MnmG (623 aa).

FAD is bound by residues glycine 11–glycine 16, valine 123, and serine 178. NAD(+) is bound at residue glycine 270–phenylalanine 284. Position 367 (glutamine 367) interacts with FAD.

The protein belongs to the MnmG family. In terms of assembly, homodimer. Heterotetramer of two MnmE and two MnmG subunits. It depends on FAD as a cofactor.

It is found in the cytoplasm. In terms of biological role, NAD-binding protein involved in the addition of a carboxymethylaminomethyl (cmnm) group at the wobble position (U34) of certain tRNAs, forming tRNA-cmnm(5)s(2)U34. The sequence is that of tRNA uridine 5-carboxymethylaminomethyl modification enzyme MnmG from Phocaeicola vulgatus (strain ATCC 8482 / DSM 1447 / JCM 5826 / CCUG 4940 / NBRC 14291 / NCTC 11154) (Bacteroides vulgatus).